Here is a 1203-residue protein sequence, read N- to C-terminus: ATP-dependent helicase/nuclease subunit A (1203 aa).

One can recognise a UvrD-like helicase ATP-binding domain in the interval 4 to 472; it reads VKLTPEQNEA…IRLKENFRSR (469 aa). 25–32 lines the ATP pocket; sequence ASAGSGKT. A UvrD-like helicase C-terminal domain is found at 503-785; that stretch reads VQGNISDYPV…RVMTFHKSKG (283 aa).

It belongs to the helicase family. AddA subfamily. In terms of assembly, heterodimer of AddA and AddB/RexB. It depends on Mg(2+) as a cofactor.

It carries out the reaction Couples ATP hydrolysis with the unwinding of duplex DNA by translocating in the 3'-5' direction.. The catalysed reaction is ATP + H2O = ADP + phosphate + H(+). The heterodimer acts as both an ATP-dependent DNA helicase and an ATP-dependent, dual-direction single-stranded exonuclease. Recognizes the chi site generating a DNA molecule suitable for the initiation of homologous recombination. The AddA nuclease domain is required for chi fragment generation; this subunit has the helicase and 3' -&gt; 5' nuclease activities. This is ATP-dependent helicase/nuclease subunit A from Lactococcus lactis subsp. cremoris (strain SK11).